Reading from the N-terminus, the 180-residue chain is ATP-dependent protease subunit HslV (180 aa).

The active site involves Thr2. Residues Gly158, Cys161, and Thr164 each contribute to the Na(+) site.

The protein belongs to the peptidase T1B family. HslV subfamily. As to quaternary structure, a double ring-shaped homohexamer of HslV is capped on each side by a ring-shaped HslU homohexamer. The assembly of the HslU/HslV complex is dependent on binding of ATP.

It is found in the cytoplasm. The catalysed reaction is ATP-dependent cleavage of peptide bonds with broad specificity.. With respect to regulation, allosterically activated by HslU binding. In terms of biological role, protease subunit of a proteasome-like degradation complex believed to be a general protein degrading machinery. This is ATP-dependent protease subunit HslV from Baumannia cicadellinicola subsp. Homalodisca coagulata.